Here is a 513-residue protein sequence, read N- to C-terminus: MADPRVPSSYNVTPRIRYNTVGGVNGPLVILDNVKFPRYNEIVTLTLPDGTQRSGQVLEARGNRAVVQVFEGTSGIDVKKTKVEFTGESLKLGVSEDMLGRIFDGSGRAIDKGPKVLAEEYLDINGSPINPYAREYPQEMISTGISAIDTMNSIARGQKIPIFSAAGLPHNEIAAQICRQAGLVQRQGITNKGVHDGHEENFSIVFGAMGVNLETARFFTRDFEENGSLGRTTLFLNLANDPTIERIITPRLALTTAEYYAYQLEKHVLVILTDLSSYCDALREVSAAREEVPGRRGFPGYMYTDLSTIYERAGRVAGRNGSITQIPILTMPNDDITHPIPDLTGYITEGQIFVDRGLHNRGIYPPINVLPSLSRLMKSAIGEGMTRKDHGDVSNQLYAKYAIGRDAAAMKAVVGEEALSNEDKLSLEFLDKFERSFIAQGPYESRTIFESLDLAWSLLRIYRKDMLNRIPKKIIDEFYSRSAADRKGKGKDKPTTKDTRDTAAPEEENLIDA.

R375 contacts ATP. A compositionally biased stretch (basic and acidic residues) spans 484–503; that stretch reads ADRKGKGKDKPTTKDTRDTA. Residues 484–513 form a disordered region; that stretch reads ADRKGKGKDKPTTKDTRDTAAPEEENLIDA. Acidic residues predominate over residues 504-513; the sequence is APEEENLIDA.

This sequence belongs to the ATPase alpha/beta chains family. As to quaternary structure, V-ATPase is a heteromultimeric enzyme composed of a peripheral catalytic V1 complex (components A to H) attached to an integral membrane V0 proton pore complex (components: a, c, c', c'', d, e, f and VOA1).

It is found in the vacuole membrane. In terms of biological role, non-catalytic subunit of the V1 complex of vacuolar(H+)-ATPase (V-ATPase), a multisubunit enzyme composed of a peripheral complex (V1) that hydrolyzes ATP and a membrane integral complex (V0) that translocates protons. V-ATPase is responsible for acidifying and maintaining the pH of intracellular compartments. The chain is V-type proton ATPase subunit B from Neurospora crassa (strain ATCC 24698 / 74-OR23-1A / CBS 708.71 / DSM 1257 / FGSC 987).